Here is a 216-residue protein sequence, read N- to C-terminus: Octanoyltransferase (216 aa).

The BPL/LPL catalytic domain maps to 30–204; it reads KNNINEIWLL…NCKKFLMMNN (175 aa). Substrate-binding positions include 68–75, 135–137, and 148–150; these read RGGHMTFH, SIG, and GLA. Catalysis depends on Cys166, which acts as the Acyl-thioester intermediate.

Belongs to the LipB family.

It is found in the cytoplasm. The enzyme catalyses octanoyl-[ACP] + L-lysyl-[protein] = N(6)-octanoyl-L-lysyl-[protein] + holo-[ACP] + H(+). It functions in the pathway protein modification; protein lipoylation via endogenous pathway; protein N(6)-(lipoyl)lysine from octanoyl-[acyl-carrier-protein]: step 1/2. Its function is as follows. Catalyzes the transfer of endogenously produced octanoic acid from octanoyl-acyl-carrier-protein onto the lipoyl domains of lipoate-dependent enzymes. Lipoyl-ACP can also act as a substrate although octanoyl-ACP is likely to be the physiological substrate. In Wigglesworthia glossinidia brevipalpis, this protein is Octanoyltransferase.